An 862-amino-acid chain; its full sequence is Active breakpoint cluster region-related protein (862 aa).

The segment at aspartate 30 to glutamate 84 is disordered. A compositionally biased stretch (basic and acidic residues) spans asparagine 34–serine 44. Polar residues predominate over residues proline 54–serine 67. The DH domain maps to methionine 93–aspartate 286. Residues glutamine 303 to lysine 462 form the PH domain. A C2 domain is found at valine 488–isoleucine 616. The Rho-GAP domain maps to valine 650–phenylalanine 848.

It is found in the cell projection. The protein localises to the dendritic spine. It localises to the axon. Its subcellular location is the synapse. Functionally, protein with a unique structure having two opposing regulatory activities toward small GTP-binding proteins. The C-terminus is a GTPase-activating protein domain which stimulates GTP hydrolysis by RAC1, RAC2 and CDC42. Accelerates the intrinsic rate of GTP hydrolysis of RAC1 or CDC42, leading to down-regulation of the active GTP-bound form. The central Dbl homology (DH) domain functions as guanine nucleotide exchange factor (GEF) that modulates the GTPases CDC42, RHOA and RAC1. Promotes the conversion of CDC42, RHOA and RAC1 from the GDP-bound to the GTP-bound form. This chain is Active breakpoint cluster region-related protein (abr), found in Xenopus tropicalis (Western clawed frog).